A 943-amino-acid polypeptide reads, in one-letter code: Translation initiation factor IF-2 (943 aa).

A disordered region spans residues 46–359; the sequence is IKGMLSKQSA…MPQRKERPLP (314 aa). Low complexity predominate over residues 57–76; that stretch reads KAPSSQAAKTPAKAAKTSSA. Composition is skewed to basic and acidic residues over residues 92–103 and 110–124; these read SNDHADVAEHSQ and AKQENKPARSNKTSD. Residues 130–141 show a composition bias toward polar residues; that stretch reads SKSTILRPRSTQ. Positions 142–190 are enriched in low complexity; the sequence is TAHTNTNHNRGGNTASANNTANGRNSNRSNNNNNNRSANNANRSGNNNR. Basic and acidic residues-rich tracts occupy residues 191-205, 239-250, and 259-271; these read SNERNRNDRNRRFDN, ASERQQPKRQEA, and KRSEQPRTERPRT. Composition is skewed to low complexity over residues 289–299 and 315–330; these read PAAAAPKPASA and NFGRSNSYGNRNGFNR. Positions 331-342 are enriched in basic residues; the sequence is NNRRNKKNKRRQ. Residues 346 to 358 are compositionally biased toward basic and acidic residues; sequence PKKEMPQRKERPL. Residues 444-613 form the tr-type G domain; the sequence is PRPPVVTIMG…LLEADVLELK (170 aa). A G1 region spans residues 453–460; that stretch reads GHVDHGKT. 453–460 lines the GTP pocket; that stretch reads GHVDHGKT. The tract at residues 478–482 is G2; sequence GITQH. The interval 499–502 is G3; that stretch reads DTPG. GTP contacts are provided by residues 499 to 503 and 553 to 556; these read DTPGH and NKID. Residues 553–556 are G4; the sequence is NKID. The G5 stretch occupies residues 589 to 591; sequence SAK.

Belongs to the TRAFAC class translation factor GTPase superfamily. Classic translation factor GTPase family. IF-2 subfamily.

The protein resides in the cytoplasm. Its function is as follows. One of the essential components for the initiation of protein synthesis. Protects formylmethionyl-tRNA from spontaneous hydrolysis and promotes its binding to the 30S ribosomal subunits. Also involved in the hydrolysis of GTP during the formation of the 70S ribosomal complex. This Lacticaseibacillus casei (strain BL23) (Lactobacillus casei) protein is Translation initiation factor IF-2.